A 410-amino-acid polypeptide reads, in one-letter code: Beta-arrestin-2 (410 aa).

Tyr48 is subject to Phosphotyrosine. Hydroxyproline; by PHD2 is present on residues Pro176 and Pro181. The interval 241–410 is interaction with TRAF6; sequence ADICLFSTAQ…KDDDCDDQFC (170 aa). Phosphoserine is present on Ser361. Residues 364-410 form an interaction with AP2B1 region; it reads RETDVPVDTNLIEFDTNYATDDDIVFEDFARLRLKGMKDDDCDDQFC. Thr383 is subject to Phosphothreonine. The short motif at 386–396 is the [DE]-X(1,2)-F-X-X-[FL]-X-X-X-R motif element; it reads DIVFEDFARLR.

This sequence belongs to the arrestin family. As to quaternary structure, homooligomer; the self-association is mediated by InsP6-binding. Heterooligomer with ARRB1; the association is mediated by InsP6-binding. Interacts with ADRB2 and CHRM2. Interacts with PDE4A. Interacts with PDE4D. Interacts with MAPK10, MAPK1 and MAPK3. Interacts with DRD2. Interacts with FSHR. Interacts with CLTC. Interacts with HTR2C. Interacts with CCR5. Interacts with CXCR4. Interacts with SRC. Interacts with DUSP16; the interaction is interrupted by stimulation of AGTR1 and activation of MAPK10. Interacts with CHUK; the interaction is enhanced stimulation of ADRB2. Interacts with RELA. Interacts with MDM2; the interaction is enhanced by activation of GPCRs. Interacts with SLC9A5. Interacts with TRAF6. Interacts with IGF1R. Interacts with ENG. Interacts with ARRB2. Interacts with KIR2DL1, KIR2DL3 and KIR2DL4. Interacts with LDLR. Interacts with AP2B1. Interacts with C5AR1. Interacts with RAF1. Interacts with MAP2K1. Interacts with MAPK1. Interacts with MAPK10; the interaction enhances MAPK10 activation by MAP3K5. Interacts with MAP2K4; the interaction is enhanced by presence of MAP3K5 and MAPK10. Interacts with MAP3K5. Interacts with AKT1. Interacts with IKBKB and MAP3K14. Interacts with SMO (activated). Interacts with GSK3A and GSK3B. Interacts with CXCR4; the interaction is dependent on C-terminal phosphorylation of CXCR4 and allows activation of MAPK1 and MAPK3. Interacts with GPR143. Interacts with HCK and CXCR1 (phosphorylated). Associates with protein phosphatase 2A (PP2A). Interacts with ACKR3 and ACKR4. Interacts with ARRDC1; the interaction is direct. Interacts with GPR61, GPR62 and GPR135. Interacts (via NACHT and LRR domains) with NLRP3; this interaction is direct and inducible by omega-3 polyunsaturated fatty acids (PUFAs). Interacts with FFAR4 (via C-terminus); this interaction is stimulated by long-chain fatty acids (LCFAs). Interacts with GPR35. Interacts with GPR84. Interacts with TIGIT; this interaction inhibits the NF-kappa-B pathway. Interacts with TGFBR3. Phosphorylated at Thr-383 in the cytoplasm; probably dephosphorylated at the plasma membrane. The phosphorylation does not regulate internalization and recycling of ADRB2, interaction with clathrin or AP2B1. In terms of processing, the ubiquitination status appears to regulate the formation and trafficking of beta-arrestin-GPCR complexes and signaling. Ubiquitination appears to occur GPCR-specific. Ubiquitinated by MDM2; the ubiquitination is required for rapid internalization of ADRB2. Deubiquitinated by USP33; the deubiquitination leads to a dissociation of the beta-arrestin-GPCR complex. Stimulation of a class A GPCR, such as ADRB2, induces transient ubiquitination and subsequently promotes association with USP33. Stimulation of a class B GPCR promotes a sustained ubiquitination. Deubiquitinated by USP20; allowing USP20 to deubiquitinate TRAF6 leading to inhibition of NF-kappa-B signaling. Post-translationally, hydroxylation by PHD2 modulates the rate of internalization by slowing down recruitment to the plasma membrane and inhibiting subsequent co-internalization with class A receptors. In terms of tissue distribution, predominantly localized in neuronal tissues and in the spleen.

It is found in the cytoplasm. The protein resides in the nucleus. It localises to the cell membrane. Its subcellular location is the membrane. The protein localises to the clathrin-coated pit. It is found in the cytoplasmic vesicle. Functionally, functions in regulating agonist-mediated G-protein coupled receptor (GPCR) signaling by mediating both receptor desensitization and resensitization processes. During homologous desensitization, beta-arrestins bind to the GPRK-phosphorylated receptor and sterically preclude its coupling to the cognate G-protein; the binding appears to require additional receptor determinants exposed only in the active receptor conformation. The beta-arrestins target many receptors for internalization by acting as endocytic adapters (CLASPs, clathrin-associated sorting proteins) and recruiting the GPRCs to the adapter protein 2 complex 2 (AP-2) in clathrin-coated pits (CCPs). However, the extent of beta-arrestin involvement appears to vary significantly depending on the receptor, agonist and cell type. Internalized arrestin-receptor complexes traffic to intracellular endosomes, where they remain uncoupled from G-proteins. Two different modes of arrestin-mediated internalization occur. Class A receptors, like ADRB2, OPRM1, ENDRA, D1AR and ADRA1B dissociate from beta-arrestin at or near the plasma membrane and undergo rapid recycling. Class B receptors, like AVPR2, AGTR1, NTSR1, TRHR and TACR1 internalize as a complex with arrestin and traffic with it to endosomal vesicles, presumably as desensitized receptors, for extended periods of time. Receptor resensitization then requires that receptor-bound arrestin is removed so that the receptor can be dephosphorylated and returned to the plasma membrane. Mediates endocytosis of CCR7 following ligation of CCL19 but not CCL21. Involved in internalization of P2RY1, P2RY4, P2RY6 and P2RY11 and ATP-stimulated internalization of P2RY2. Involved in phosphorylation-dependent internalization of OPRD1 and subsequent recycling or degradation. Involved in ubiquitination of IGF1R. Beta-arrestins function as multivalent adapter proteins that can switch the GPCR from a G-protein signaling mode that transmits short-lived signals from the plasma membrane via small molecule second messengers and ion channels to a beta-arrestin signaling mode that transmits a distinct set of signals that are initiated as the receptor internalizes and transits the intracellular compartment. Acts as a signaling scaffold for MAPK pathways such as MAPK1/3 (ERK1/2) and MAPK10 (JNK3). ERK1/2 and JNK3 activated by the beta-arrestin scaffold are largely excluded from the nucleus and confined to cytoplasmic locations such as endocytic vesicles, also called beta-arrestin signalosomes. Acts as a signaling scaffold for the AKT1 pathway. GPCRs for which the beta-arrestin-mediated signaling relies on both ARRB1 and ARRB2 (codependent regulation) include ADRB2, F2RL1 and PTH1R. For some GPCRs the beta-arrestin-mediated signaling relies on either ARRB1 or ARRB2 and is inhibited by the other respective beta-arrestin form (reciprocal regulation). Increases ERK1/2 signaling in AGTR1- and AVPR2-mediated activation (reciprocal regulation). Involved in CCR7-mediated ERK1/2 signaling involving ligand CCL19. Is involved in type-1A angiotensin II receptor/AGTR1-mediated ERK activity. Is involved in type-1A angiotensin II receptor/AGTR1-mediated MAPK10 activity. Is involved in dopamine-stimulated AKT1 activity in the striatum by disrupting the association of AKT1 with its negative regulator PP2A. Involved in AGTR1-mediated chemotaxis. Appears to function as signaling scaffold involved in regulation of MIP-1-beta-stimulated CCR5-dependent chemotaxis. Involved in attenuation of NF-kappa-B-dependent transcription in response to GPCR or cytokine stimulation by interacting with and stabilizing CHUK. Suppresses UV-induced NF-kappa-B-dependent activation by interacting with CHUK. The function is promoted by stimulation of ADRB2 and dephosphorylation of ARRB2. Involved in IL8-mediated granule release in neutrophils. Involved in p53/TP53-mediated apoptosis by regulating MDM2 and reducing the MDM2-mediated degradation of p53/TP53. May serve as nuclear messenger for GPCRs. Upon stimulation of OR1D2, may be involved in regulation of gene expression during the early processes of fertilization. Also involved in regulation of receptors other than GPCRs. Involved in endocytosis of TGFBR2 and TGFBR3 and down-regulates TGF-beta signaling such as NF-kappa-B activation. Involved in endocytosis of low-density lipoprotein receptor/LDLR. Involved in endocytosis of smoothened homolog/Smo, which also requires GRK2. Involved in endocytosis of SLC9A5. Involved in endocytosis of ENG and subsequent TGF-beta-mediated ERK activation and migration of epithelial cells. Involved in Toll-like receptor and IL-1 receptor signaling through the interaction with TRAF6 which prevents TRAF6 autoubiquitination and oligomerization required for activation of NF-kappa-B and JUN. Involved in insulin resistance by acting as insulin-induced signaling scaffold for SRC, AKT1 and INSR. Involved in regulation of inhibitory signaling of natural killer cells by recruiting PTPN6 and PTPN11 to KIR2DL1. Involved in the internalization of the atypical chemokine receptor ACKR3. Acts as an adapter protein coupling FFAR4 receptor to specific downstream signaling pathways, as well as mediating receptor endocytosis. During the activation step of NLRP3 inflammasome, directly associates with NLRP3 leading to inhibition of pro-inflammatory cytokine release and inhibition of inflammation. This is Beta-arrestin-2 (Arrb2) from Mus musculus (Mouse).